The following is an 800-amino-acid chain: Cell division cycle 5-like protein (800 aa).

HTH myb-type domains follow at residues 1–56 and 57–106; these read MRNV…DPSI and KKTE…DEVQ. 2 consecutive DNA-binding regions (H-T-H motif) follow at residues 29 to 52 and 80 to 102; these read WARISSLLTRKSPAQCKARWHEWL and WKTIAPLVGRTASQCLERYNRLL. 4 disordered regions span residues 109 to 186, 334 to 378, 399 to 445, and 571 to 610; these read QDNE…KRKF, YEKL…NIRT, QTPL…KQSL, and NKTFPNDSITPSSTFDDDDDDDNHHHHHDDIDNNSINDND. Gly residues predominate over residues 113-122; it reads NGGGSGGGGT. The span at 133 to 142 shows a compositional bias: basic and acidic residues; that stretch reads NDPRRLRMGD. A compositionally biased stretch (gly residues) spans 340 to 351; it reads SGSGGGSGGVGV. Residues 361–376 are compositionally biased toward low complexity; sequence TASISSTAANNNTNNI. Polar residues-rich tracts occupy residues 409-445 and 573-584; these read NVSQTPLPKSVNNSTPFRTPNPLANQTPTQHNKKQSL and TFPNDSITPSST. The span at 592-601 shows a compositional bias: basic and acidic residues; sequence DNHHHHHDDI. 2 coiled-coil regions span residues 621–700 and 748–800; these read NTEL…KIKN and VALK…LSIF.

The protein belongs to the CEF1 family. In terms of assembly, component of the precatalytic, catalytic and postcatalytic spliceosome complexes.

It is found in the nucleus. Its subcellular location is the cytoplasm. DNA-binding protein involved in cell cycle control. May act as a transcription activator. Plays a role in pre-mRNA splicing as core component of precatalytic, catalytic and postcatalytic spliceosomal complexes. May also play a role in the response to DNA damage (DDR). In Dictyostelium discoideum (Social amoeba), this protein is Cell division cycle 5-like protein (cdc5l).